Consider the following 593-residue polypeptide: Histone-arginine methyltransferase CARMER (593 aa).

Residues Ala122–Asp429 enclose the SAM-dependent MTase PRMT-type domain. Residues Gln135, Arg144, Gly168, Glu190, Glu219, and Thr247 each coordinate S-adenosyl-L-methionine. Arg482 is modified (asymmetric dimethylarginine; by autocatalysis). Residues Leu521–Leu540 form a disordered region. Positions Ser523–Thr535 are enriched in low complexity.

The protein belongs to the class I-like SAM-binding methyltransferase superfamily. Protein arginine N-methyltransferase family. In terms of assembly, homodimer. Post-translationally, the dimethylated protein is the major form.

It localises to the cytoplasm. Its subcellular location is the nucleus. The catalysed reaction is L-arginyl-[protein] + 2 S-adenosyl-L-methionine = N(omega),N(omega)-dimethyl-L-arginyl-[protein] + 2 S-adenosyl-L-homocysteine + 2 H(+). Its function is as follows. Methylates (mono- and asymmetric dimethylation) the guanidino nitrogens of arginyl residues in proteins. May methylate histone H3 at 'Arg-17' and activate transcription via chromatin remodeling. The sequence is that of Histone-arginine methyltransferase CARMER from Aedes aegypti (Yellowfever mosquito).